Here is a 474-residue protein sequence, read N- to C-terminus: Sialyltransferase-like protein 1 (474 aa).

At 1–14 (MRSHQAGRKLPLLQ) the chain is on the cytoplasmic side. Residues 15–35 (LLGCVAVFSVFVFTIQSSFFA) form a helical; Signal-anchor for type II membrane protein membrane-spanning segment. Over 36-474 (DNNRKLDLQP…CVRHPLKLDT (439 aa)) the chain is Lumenal. N-linked (GlcNAc...) asparagine glycosylation is found at Asn88, Asn120, Asn155, and Asn243. The segment at 376-421 (RLQRSQQPTSSKRDGSGQFGNCKVWGDADPTKGPVSGSPDMSETRK) is disordered.

The protein belongs to the glycosyltransferase 29 family. Highly expressed in inflorescences and siliques and at lower levels in roots, leaves and stems.

It is found in the golgi apparatus membrane. In terms of biological role, required for normal pollen grain germination and pollen tube growth. May not be required for pollen development and female gametophytic function. This Arabidopsis thaliana (Mouse-ear cress) protein is Sialyltransferase-like protein 1.